Here is a 257-residue protein sequence, read N- to C-terminus: Pyridoxine 5'-phosphate synthase (257 aa).

Residue Asn6 coordinates 3-amino-2-oxopropyl phosphate. A 1-deoxy-D-xylulose 5-phosphate-binding site is contributed by 8-9; the sequence is DH. A 3-amino-2-oxopropyl phosphate-binding site is contributed by Arg17. His41 (proton acceptor) is an active-site residue. Residues Arg43 and His48 each contribute to the 1-deoxy-D-xylulose 5-phosphate site. The Proton acceptor role is filled by Glu68. 1-deoxy-D-xylulose 5-phosphate is bound at residue Thr98. The active-site Proton donor is the His210. 3-amino-2-oxopropyl phosphate contacts are provided by residues Gly211 and 232–233; that span reads GQ.

This sequence belongs to the PNP synthase family. In terms of assembly, homooctamer; tetramer of dimers.

It is found in the cytoplasm. The catalysed reaction is 3-amino-2-oxopropyl phosphate + 1-deoxy-D-xylulose 5-phosphate = pyridoxine 5'-phosphate + phosphate + 2 H2O + H(+). The protein operates within cofactor biosynthesis; pyridoxine 5'-phosphate biosynthesis; pyridoxine 5'-phosphate from D-erythrose 4-phosphate: step 5/5. In terms of biological role, catalyzes the complicated ring closure reaction between the two acyclic compounds 1-deoxy-D-xylulose-5-phosphate (DXP) and 3-amino-2-oxopropyl phosphate (1-amino-acetone-3-phosphate or AAP) to form pyridoxine 5'-phosphate (PNP) and inorganic phosphate. The protein is Pyridoxine 5'-phosphate synthase of Campylobacter jejuni subsp. doylei (strain ATCC BAA-1458 / RM4099 / 269.97).